We begin with the raw amino-acid sequence, 338 residues long: 1-aminocyclopropane-1-carboxylate deaminase (338 aa).

K51 is subject to N6-(pyridoxal phosphate)lysine. S78 serves as the catalytic Nucleophile.

This sequence belongs to the ACC deaminase/D-cysteine desulfhydrase family. In terms of assembly, homotrimer. Requires pyridoxal 5'-phosphate as cofactor.

It carries out the reaction 1-aminocyclopropane-1-carboxylate + H2O = 2-oxobutanoate + NH4(+). In terms of biological role, catalyzes a cyclopropane ring-opening reaction, the irreversible conversion of 1-aminocyclopropane-1-carboxylate (ACC) to ammonia and alpha-ketobutyrate. Allows growth on ACC as a nitrogen source. The sequence is that of 1-aminocyclopropane-1-carboxylate deaminase from Burkholderia multivorans (strain ATCC 17616 / 249).